We begin with the raw amino-acid sequence, 1104 residues long: Reverse gyrase (1104 aa).

The RG N-terminal-type zinc-finger motif lies at 1-39 (MAVNSKYHHSCINCGGLNTDERNERGLPCEVCLPEDSPS). 4 residues coordinate Zn(2+): cysteine 11, cysteine 14, cysteine 29, and cysteine 32. ADP-binding residues include phenylalanine 75, aspartate 78, glutamine 83, glycine 103, glycine 105, lysine 106, threonine 107, and threonine 108. ATP-binding positions include glutamine 83 and 100–107 (APTGVGKT). One can recognise a Helicase ATP-binding domain in the interval 87–242 (AKRIVQGKSF…FSTIKQGKIY (156 aa)). The DEAD box motif lies at 203–206 (DDVD). The tract at residues 223–250 (GIPEEIIRKAFSTIKQGKIYERPKNLKP) is insert region. The Helicase C-terminal domain occupies 300–522 (KLVELLEIFR…EAEANWKELV (223 aa)). Residues 390-460 (RFSLELDKAP…KDEDLELIIP (71 aa)) are latch region. The segment at 538–1104 (DTSRSLLIIV…EEIKSLMEEG (567 aa)) is topoisomerase I. The region spanning 542 to 699 (SLLIIVESPT…SLRRIEMHEI (158 aa)) is the Toprim domain. Glutamate 548 provides a ligand contact to Mg(2+). An RG C-terminal-type zinc finger spans residues 618 to 645 (LKRCRDCGYQFTEDRDECPVCSSKNIDD). Residues cysteine 621, cysteine 624, cysteine 635, and cysteine 638 each contribute to the Zn(2+) site. Aspartate 668 lines the Mg(2+) pocket. One can recognise a Topo IA-type catalytic domain in the interval 715–1101 (DFNLVKAQIV…LLYEEIKSLM (387 aa)). The O-(5'-phospho-DNA)-tyrosine intermediate role is filled by tyrosine 851.

In the N-terminal section; belongs to the DEAD box helicase family. DDVD subfamily. The protein in the C-terminal section; belongs to the type IA topoisomerase family. In terms of assembly, monomer. Zn(2+) is required as a cofactor. The cofactor is Mg(2+).

The protein localises to the cytoplasm. The catalysed reaction is ATP + H2O = ADP + phosphate + H(+). Functionally, modifies the topological state of DNA by introducing positive supercoils in an ATP-dependent process. Increases the linking number in steps of +1. Probably recognizes regions with a low GC content which melt and form a ssDNA bubble, allowing the enzyme to bind and cleave the DNA prior to strand passage; the bubble is probably cleaved by 2 reverse gyrase molecules, one on each strand. Positively supercoils DNA with all NTPS, although it strongly prefers ATP. In the presence of non-hydrolyzable ATP analogs it partially relaxes negative supercoils. Has an intrinsic ATPase activity that is stimulated by DNA; ssDNA is most effective. Binds to single-stranded DNA, transiently cleaves and then rejoins the ends, introducing a positive supercoil in the process. The scissile phosphodiester is attacked by the catalytic tyrosine of the enzyme, resulting in the formation of a DNA-(5'-phosphotyrosyl)-enzyme intermediate. The helicase-like domain is a nucleotide-dependent switch that alternates between a physically closed ATP-bound state with a slight preference for dsDNA, and an open ADP-bound state with a high preference for ssDNA. Whole enzyme has a very poor (k-unwind=0.001 sec(-1)) non-processive helicase activity in the 3'-5' direction that works on short substrates, while the isolated helicase domain has a slightly better helicase activity that works in both directions. Probably involved in rewinding DNA strands in regions of the chromosome that have opened up to allow replication, transcription, DNA repair and/or for DNA protection. The polypeptide is Reverse gyrase (Thermotoga maritima (strain ATCC 43589 / DSM 3109 / JCM 10099 / NBRC 100826 / MSB8)).